The following is a 229-amino-acid chain: Glutamine amidotransferase-like class 1 domain-containing protein 1 (229 aa).

The signal sequence occupies residues 1 to 34 (MKKQGAPVSGGGTERLTKPSCLMVGSAVAEGVSA). Residues Asn154 and Asn212 are each glycosylated (N-linked (GlcNAc...) asparagine).

It belongs to the peptidase C56 family. Homotetramer. Component of the FERRY complex.

It is found in the secreted. It localises to the early endosome. In terms of biological role, component of the FERRY complex (Five-subunit Endosomal Rab5 and RNA/ribosome intermediary). The FERRY complex directly interacts with mRNAs and RAB5A, and functions as a RAB5A effector involved in the localization and the distribution of specific mRNAs most likely by mediating their endosomal transport. The complex recruits mRNAs and ribosomes to early endosomes through direct mRNA-interaction. This chain is Glutamine amidotransferase-like class 1 domain-containing protein 1, found in Xenopus laevis (African clawed frog).